Here is a 163-residue protein sequence, read N- to C-terminus: Interleukin-31 (163 aa).

A signal peptide spans 1–23; sequence MIFHTGTTKPTLVLLCCIGTWLA. 3 N-linked (GlcNAc...) asparagine glycosylation sites follow: Asn-55, Asn-84, and Asn-124.

The protein resides in the secreted. In terms of biological role, activates STAT3 and possibly STAT1 and STAT5 through the IL31 heterodimeric receptor composed of IL31RA and OSMR. May function in skin immunity. Enhances myeloid progenitor cell survival in vitro. Induces RETNLA and serum amyloid A protein expression in macrophages. In Mus musculus (Mouse), this protein is Interleukin-31 (Il31).